Consider the following 429-residue polypeptide: Histidine--tRNA ligase (429 aa).

It belongs to the class-II aminoacyl-tRNA synthetase family. Homodimer.

Its subcellular location is the cytoplasm. It catalyses the reaction tRNA(His) + L-histidine + ATP = L-histidyl-tRNA(His) + AMP + diphosphate + H(+). This chain is Histidine--tRNA ligase, found in Streptococcus pneumoniae serotype 4 (strain ATCC BAA-334 / TIGR4).